Here is a 252-residue protein sequence, read N- to C-terminus: T-box transcription factor mls-1 (252 aa).

Positions 40-210 form a DNA-binding region, T-box; it reads LWRRFHNLGT…SNPFAKGFRE (171 aa).

In terms of assembly, may interact with unc-37.

It is found in the nucleus. In terms of biological role, probable transcription factor required for the cell fate specification of non-striated uterine muscle precursor cells. Furthermore, may function with the transcriptional corepressor unc-37. This is T-box transcription factor mls-1 from Caenorhabditis elegans.